The following is a 290-amino-acid chain: Cilia- and flagella-associated protein 298 (290 aa).

Belongs to the CFAP298 family. In terms of assembly, interacts with ZMYND10. In terms of tissue distribution, expressed in the trachea (at protein level).

It localises to the cytoplasm. Its subcellular location is the cytoskeleton. It is found in the cilium basal body. Functionally, plays a role in motile cilium function, possibly by acting on outer dynein arm assembly. Seems to be important for initiation rather than maintenance of cilium motility. Required for correct positioning of cilia at the apical cell surface, suggesting an additional role in the planar cell polarity (PCP) pathway. May suppress canonical Wnt signaling activity. The polypeptide is Cilia- and flagella-associated protein 298 (Rattus norvegicus (Rat)).